A 415-amino-acid polypeptide reads, in one-letter code: Multifunctional CCA protein (415 aa).

Residues glycine 8 and arginine 11 each contribute to the ATP site. CTP contacts are provided by glycine 8 and arginine 11. Aspartate 21 and aspartate 23 together coordinate Mg(2+). Positions 91, 143, and 146 each coordinate ATP. CTP is bound by residues arginine 91, arginine 143, and arginine 146. Residues 232 to 333 (TGVHVMMVID…VRLLERCDAL (102 aa)) enclose the HD domain.

The protein belongs to the tRNA nucleotidyltransferase/poly(A) polymerase family. Bacterial CCA-adding enzyme type 1 subfamily. In terms of assembly, monomer. Can also form homodimers and oligomers. Mg(2+) serves as cofactor. It depends on Ni(2+) as a cofactor.

It catalyses the reaction a tRNA precursor + 2 CTP + ATP = a tRNA with a 3' CCA end + 3 diphosphate. The enzyme catalyses a tRNA with a 3' CCA end + 2 CTP + ATP = a tRNA with a 3' CCACCA end + 3 diphosphate. Catalyzes the addition and repair of the essential 3'-terminal CCA sequence in tRNAs without using a nucleic acid template. Adds these three nucleotides in the order of C, C, and A to the tRNA nucleotide-73, using CTP and ATP as substrates and producing inorganic pyrophosphate. tRNA 3'-terminal CCA addition is required both for tRNA processing and repair. Also involved in tRNA surveillance by mediating tandem CCA addition to generate a CCACCA at the 3' terminus of unstable tRNAs. While stable tRNAs receive only 3'-terminal CCA, unstable tRNAs are marked with CCACCA and rapidly degraded. The chain is Multifunctional CCA protein from Cupriavidus taiwanensis (strain DSM 17343 / BCRC 17206 / CCUG 44338 / CIP 107171 / LMG 19424 / R1) (Ralstonia taiwanensis (strain LMG 19424)).